We begin with the raw amino-acid sequence, 428 residues long: Tyrosine--tRNA ligase (428 aa).

L-tyrosine is bound at residue tyrosine 37. A 'HIGH' region motif is present at residues proline 42–histidine 51. The L-tyrosine site is built by tyrosine 175 and glutamine 179. Residues lysine 235–serine 239 carry the 'KMSKS' region motif. An ATP-binding site is contributed by lysine 238. The 58-residue stretch at alanine 358–glycine 415 folds into the S4 RNA-binding domain.

It belongs to the class-I aminoacyl-tRNA synthetase family. TyrS type 1 subfamily. Homodimer.

The protein resides in the cytoplasm. It catalyses the reaction tRNA(Tyr) + L-tyrosine + ATP = L-tyrosyl-tRNA(Tyr) + AMP + diphosphate + H(+). Functionally, catalyzes the attachment of tyrosine to tRNA(Tyr) in a two-step reaction: tyrosine is first activated by ATP to form Tyr-AMP and then transferred to the acceptor end of tRNA(Tyr). The polypeptide is Tyrosine--tRNA ligase (Corynebacterium jeikeium (strain K411)).